A 1131-amino-acid chain; its full sequence is MSVSATENDVPRFFVGCEESDELLDQSKPENLDNLYEHTEDEEDEEDDEYDSPPERQIVVGICAMAKKSKSKPMKEILERLSLFKYITVVIFEEEVILNETVENWPLCDCLISFHSKGFLLDKAVAYAKLRNPFVINDLNLQYQIQDRREVYRILTNEGIMLPRYAVLNRDPNKPEECNLIEGEDHVEVNGEIFQKPFVEKPVSAEDHNVYIYYPTSAGGGSQRLFRKIGSRSSVYSPESSVRKTGSYIYEEFMPTDGTDVKVYTVGPDYAHAEARKSPALDGKVERDSEGKEVRYPVILNAREKLIAWKVCLAFKQTVCGFDLLRASGQSYVCDVNGFSFVKNSMKYYDDCAKILGNIIMRELAPVFHIPWSIPLEAEDIPIVPTTSGTKMELRCVIAVIRHGDRTPKQKMKMEVRHQRFFDLFEKYHGYKTGKIKLKKPKQLQEVLDIARQLLVELGQNNDSEIEESKAKLEQLKTVLEMYGHFSGINRKVQLTYLPHGCPKTSSEEEDCRREEPSLLLVLKWGGELTPAGRVQAEELGRAFRCMYPGGQGDYAGFPGCGLLRLHSTYRHDLKIYASDEGRVQMTAAAFAKGLLALEGELTPILVQMVKSANMNGLLDSDSDSLSSCQHRVKARLHEILQRDRDFSSEDFEKLSPTGSVSQIKSMHFIKNPVKTCDKVYSLIQSLTSQIRQRMEDPKFADIQLYHSETLELMLRRWSKLEKDFKTKNGRYDISKIPDIYDCIKYDVQHNCSLKLENTMELYRLSKALADIVIPQEYGISRPEKLEIAKGYCTPLVRKIRSDLQRTQDDDTVNKLHPLYSRGVMSPERHVRTRLYFTSESHVHSLLSILRFGALCDETKDEQWKRAMDYLNVVSELNYMTQIVIMLYEDPNKDVSSEERFHVELHFSPGAKGCEEDKNLPSGFGYRPASQENESSKKHTHANDSDEDLGVCRRDEPDRALVMFKPMVSDPIHIHRKSPLPRSRKIGSVEVLSDNNSHLRTARLLEQKHIGLGFELYSMVPSICPLETLHNSLSLKQVDEFLSAVAAPSSDYQMDTPTASPSTPGFYTYVGGRKISLNTYTPTKILPPLFPVSTDVEMSDSVFQSCSSTSMVPGLAGSADNTERNHQAQDD.

Positions 21–53 (DELLDQSKPENLDNLYEHTEDEEDEEDDEYDSP) are disordered. A compositionally biased stretch (basic and acidic residues) spans 25–38 (DQSKPENLDNLYEH). Residues 39–52 (TEDEEDEEDDEYDS) show a composition bias toward acidic residues. 67–68 (KK) contributes to the substrate binding site. Residues R148, K201, H208, R227, 251–254 (EEFM), and 260–262 (DVK) contribute to the ATP site. Position 227–228 (227–228 (RK)) interacts with substrate. Residues K262 and R276 each coordinate substrate. Residues S278, D323, and 335–337 (DVN) contribute to the ATP site. Residue 340-343 (SFVK) coordinates substrate. A polyphosphoinositide-binding domain region spans residues 385–456 (PTTSGTKMEL…VLDIARQLLV (72 aa)). A disordered region spans residues 912–951 (KGCEEDKNLPSGFGYRPASQENESSKKHTHANDSDEDLGV). Residues 934–951 (ESSKKHTHANDSDEDLGV) show a composition bias toward basic and acidic residues.

The protein belongs to the histidine acid phosphatase family. VIP1 subfamily.

It is found in the cytoplasm. It localises to the cytosol. The catalysed reaction is 1D-myo-inositol hexakisphosphate + ATP = 1-diphospho-1D-myo-inositol 2,3,4,5,6-pentakisphosphate + ADP. It catalyses the reaction 5-diphospho-1D-myo-inositol 1,2,3,4,6-pentakisphosphate + ATP + H(+) = 1,5-bis(diphospho)-1D-myo-inositol 2,3,4,6-tetrakisphosphate + ADP. Bifunctional inositol kinase that acts in concert with the IP6K kinases IP6K1, IP6K2 and IP6K3 to synthesize the diphosphate group-containing inositol pyrophosphates diphosphoinositol pentakisphosphate, PP-InsP5, and bis-diphosphoinositol tetrakisphosphate, (PP)2-InsP4. PP-InsP5 and (PP)2-InsP4, also respectively called InsP7 and InsP8, regulate a variety of cellular processes, including apoptosis, vesicle trafficking, cytoskeletal dynamics, exocytosis, insulin signaling and neutrophil activation. Phosphorylates inositol hexakisphosphate (InsP6) at position 1 to produce PP-InsP5 which is in turn phosphorylated by IP6Ks to produce (PP)2-InsP4. Alternatively, phosphorylates PP-InsP5 at position 1, produced by IP6Ks from InsP6, to produce (PP)2-InsP4. This chain is Inositol hexakisphosphate and diphosphoinositol-pentakisphosphate kinase 2, found in Xenopus laevis (African clawed frog).